The chain runs to 296 residues: Cell division protein DivIB (296 aa).

Residues 1 to 29 (MTKEIPKINNEYLKEKRKKQRIQQRRVQR) are Cytoplasmic-facing. Residues 30-50 (MIVGILVVIVLLILVYMFTPI) traverse the membrane as a helical segment. One can recognise a POTRA domain in the interval 51–119 (SHIKSADIKG…NPIEVNVKEH (69 aa)). At 51 to 296 (SHIKSADIKG…NKIKDEESSE (246 aa)) the chain is on the extracellular side. The span at 256–273 (NNGQTSSASAKEVQSGTA) shows a compositional bias: polar residues. The segment at 256-296 (NNGQTSSASAKEVQSGTASEDKAKDDLQKALNKIKDEESSE) is disordered. Over residues 274–296 (SEDKAKDDLQKALNKIKDEESSE) the composition is skewed to basic and acidic residues.

Belongs to the FtsQ/DivIB family. DivIB subfamily.

It localises to the cell membrane. Its function is as follows. Cell division protein that may be involved in stabilizing or promoting the assembly of the division complex. The polypeptide is Cell division protein DivIB (Staphylococcus pseudintermedius (strain HKU10-03)).